The sequence spans 173 residues: uncharacterized protein (173 aa).

The MSP domain occupies 16 to 133; the sequence is DLVLRPETIT…KHVLIRFPNK (118 aa). Positions 141–163 are enriched in basic and acidic residues; the sequence is KKMEEDDMKQQKERNKLSNEKMG. Residues 141–173 form a disordered region; that stretch reads KKMEEDDMKQQKERNKLSNEKMGIRNQNMGEKK.

This is an uncharacterized protein from Caenorhabditis elegans.